Here is a 378-residue protein sequence, read N- to C-terminus: Ribosomal RNA large subunit methyltransferase G (378 aa).

The protein belongs to the methyltransferase superfamily. RlmG family.

The protein resides in the cytoplasm. It catalyses the reaction guanosine(1835) in 23S rRNA + S-adenosyl-L-methionine = N(2)-methylguanosine(1835) in 23S rRNA + S-adenosyl-L-homocysteine + H(+). In terms of biological role, specifically methylates the guanine in position 1835 (m2G1835) of 23S rRNA. This is Ribosomal RNA large subunit methyltransferase G from Escherichia coli O9:H4 (strain HS).